The sequence spans 289 residues: UDP-3-O-acyl-N-acetylglucosamine deacetylase (289 aa).

3 residues coordinate Zn(2+): His79, His236, and Asp240. His263 (proton donor) is an active-site residue.

Belongs to the LpxC family. Zn(2+) serves as cofactor.

It catalyses the reaction a UDP-3-O-[(3R)-3-hydroxyacyl]-N-acetyl-alpha-D-glucosamine + H2O = a UDP-3-O-[(3R)-3-hydroxyacyl]-alpha-D-glucosamine + acetate. It participates in glycolipid biosynthesis; lipid IV(A) biosynthesis; lipid IV(A) from (3R)-3-hydroxytetradecanoyl-[acyl-carrier-protein] and UDP-N-acetyl-alpha-D-glucosamine: step 2/6. Its function is as follows. Catalyzes the hydrolysis of UDP-3-O-myristoyl-N-acetylglucosamine to form UDP-3-O-myristoylglucosamine and acetate, the committed step in lipid A biosynthesis. This is UDP-3-O-acyl-N-acetylglucosamine deacetylase from Rickettsia typhi (strain ATCC VR-144 / Wilmington).